Here is a 218-residue protein sequence, read N- to C-terminus: Protein-lysine N-methyltransferase M142.8 (218 aa).

The protein belongs to the class I-like SAM-binding methyltransferase superfamily. EFM5 family.

The protein localises to the cytoplasm. In terms of biological role, S-adenosyl-L-methionine-dependent protein-lysine N-methyltransferase that methylates elongation factor 1-alpha. In Caenorhabditis elegans, this protein is Protein-lysine N-methyltransferase M142.8.